The chain runs to 31 residues: Cyclopsychotride-A (31 aa).

The cyclopeptide (Ser-Asn) cross-link spans 1-31 (SIPCGESCVFIPCTVTALLGCSCKSKVCYKN). Disulfide bonds link Cys-4-Cys-21, Cys-8-Cys-23, and Cys-13-Cys-28.

The protein belongs to the cyclotide family. Bracelet subfamily. Post-translationally, this is a cyclic peptide.

In terms of biological role, probably participates in a plant defense mechanism. Has antibiotic activity. Inhibits the cytopathic effects and replication of the human immunodeficiency virus. Active against both Gram-positive and Gram-negative bacteria. This Psychotria longipes protein is Cyclopsychotride-A.